The chain runs to 189 residues: MSENYTPRLKTRYREEIREKLNGEFSYENVMQIPGVTKVVVNMGVGDAARDSKLINGAIEDLTKITGQKPQIRTAKKAIANFKLREGMPIGARVTLRGDRMWEFLDRLLTVALPRIRDFRGLNDKQFDGHGNYTFGLSEQSMFYEIDVDKIDRPRGMNITVVTTATNDDEGRALLRELGFPFKQKGSAE.

This sequence belongs to the universal ribosomal protein uL5 family. As to quaternary structure, part of the 50S ribosomal subunit; part of the 5S rRNA/L5/L18/L25 subcomplex. Contacts the 5S rRNA and the P site tRNA. Forms a bridge to the 30S subunit in the 70S ribosome.

Functionally, this is one of the proteins that bind and probably mediate the attachment of the 5S RNA into the large ribosomal subunit, where it forms part of the central protuberance. In the 70S ribosome it contacts protein S13 of the 30S subunit (bridge B1b), connecting the 2 subunits; this bridge is implicated in subunit movement. Contacts the P site tRNA; the 5S rRNA and some of its associated proteins might help stabilize positioning of ribosome-bound tRNAs. The sequence is that of Large ribosomal subunit protein uL5 from Corynebacterium jeikeium (strain K411).